A 512-amino-acid polypeptide reads, in one-letter code: D-alanine--D-alanyl carrier protein ligase (512 aa).

152-153 (TS) serves as a coordination point for ATP. D-alanine is bound at residue D199. Residue 294 to 299 (NAYGPT) coordinates ATP. Residue V303 participates in D-alanine binding. ATP-binding positions include D385, 397–400 (YGGR), and K499. K499 lines the D-alanine pocket.

Belongs to the ATP-dependent AMP-binding enzyme family. DltA subfamily.

The protein localises to the cytoplasm. It catalyses the reaction holo-[D-alanyl-carrier protein] + D-alanine + ATP = D-alanyl-[D-alanyl-carrier protein] + AMP + diphosphate. The protein operates within cell wall biogenesis; lipoteichoic acid biosynthesis. Functionally, catalyzes the first step in the D-alanylation of lipoteichoic acid (LTA), the activation of D-alanine and its transfer onto the D-alanyl carrier protein (Dcp) DltC. In an ATP-dependent two-step reaction, forms a high energy D-alanyl-AMP intermediate, followed by transfer of the D-alanyl residue as a thiol ester to the phosphopantheinyl prosthetic group of the Dcp. D-alanylation of LTA plays an important role in modulating the properties of the cell wall in Gram-positive bacteria, influencing the net charge of the cell wall. This Streptococcus pyogenes serotype M49 (strain NZ131) protein is D-alanine--D-alanyl carrier protein ligase.